The following is a 336-amino-acid chain: Heme A synthase (336 aa).

5 consecutive transmembrane segments (helical) span residues 5–25 (LTRWLLTCCIMVVAMIIVGGI), 92–112 (GRATGLIYILPLIYFYFKGII), 117–137 (ILSYIIVLLLFCVQGFMGWYM), 153–173 (LAFHLIIAVIIYHLLFYKLVK), and 191–211 (LIFSVAAIAMIYVQIFLGALV). Residue His255 participates in heme binding. Transmembrane regions (helical) follow at residues 257-277 (LGAYSLSIIVIALIISLLKVK), 284-304 (VAFYLSIALLIQLSTGVITLL), and 307-327 (VPIIAASMHQFFAIVLLSVVI). His315 lines the heme pocket.

Belongs to the COX15/CtaA family. Type 2 subfamily. In terms of assembly, interacts with CtaB. Requires heme b as cofactor.

It is found in the cell membrane. The enzyme catalyses Fe(II)-heme o + 2 A + H2O = Fe(II)-heme a + 2 AH2. The protein operates within porphyrin-containing compound metabolism; heme A biosynthesis; heme A from heme O: step 1/1. Catalyzes the conversion of heme O to heme A by two successive hydroxylations of the methyl group at C8. The first hydroxylation forms heme I, the second hydroxylation results in an unstable dihydroxymethyl group, which spontaneously dehydrates, resulting in the formyl group of heme A. In Rickettsia bellii (strain OSU 85-389), this protein is Heme A synthase.